Consider the following 390-residue polypeptide: HIT domain-containing protein DDB_G0272839 (390 aa).

Residues 168-201 (DNENEKEKEKEMELDNDNTNTESIPPITSKSTST) form a disordered region. Residues 184–201 (DNTNTESIPPITSKSTST) show a composition bias toward low complexity. The HIT domain maps to 232–343 (YFCNKPESFL…ISNDYNTKYL (112 aa)).

This chain is HIT domain-containing protein DDB_G0272839, found in Dictyostelium discoideum (Social amoeba).